The sequence spans 443 residues: Xaa-Pro dipeptidase (443 aa).

5 residues coordinate Mn(2+): aspartate 246, aspartate 257, histidine 339, glutamate 384, and glutamate 423.

It belongs to the peptidase M24B family. Bacterial-type prolidase subfamily. Mn(2+) is required as a cofactor.

It carries out the reaction Xaa-L-Pro dipeptide + H2O = an L-alpha-amino acid + L-proline. Its function is as follows. Splits dipeptides with a prolyl residue in the C-terminal position. In Klebsiella pneumoniae subsp. pneumoniae (strain ATCC 700721 / MGH 78578), this protein is Xaa-Pro dipeptidase.